Consider the following 55-residue polypeptide: Large ribosomal subunit protein bL33 (55 aa).

This sequence belongs to the bacterial ribosomal protein bL33 family.

This is Large ribosomal subunit protein bL33 from Kocuria rhizophila (strain ATCC 9341 / DSM 348 / NBRC 103217 / DC2201).